A 224-amino-acid polypeptide reads, in one-letter code: Synaptonemal complex protein 3 (224 aa).

Coiled coils occupy residues 63-97 and 137-171; these read RVKCAAQRESLERQLQDLTATDNKLSEQKRDWEER and HDSMNGQFNSLKNNLDELNIEKKQLEVAIADQSST.

Interacts with gras-1. Interacts with brc-1 and brd-1.

The protein localises to the chromosome. Plays a role in early meiotic events; during prophase I contributes to synaptonemal complex (SC) assembly, synapsis and chiasmata formation and stabilization of homologous chromosomes pairing. Required for restricting SC assembly to bridge paired chromosome axes. Required for the timely progression of meiotic crossover recombination. Required for the synapsis checkpoint. The sequence is that of Synaptonemal complex protein 3 from Caenorhabditis elegans.